We begin with the raw amino-acid sequence, 462 residues long: Argininosuccinate lyase (462 aa).

This sequence belongs to the lyase 1 family. Argininosuccinate lyase subfamily.

The protein localises to the cytoplasm. It catalyses the reaction 2-(N(omega)-L-arginino)succinate = fumarate + L-arginine. The protein operates within amino-acid biosynthesis; L-arginine biosynthesis; L-arginine from L-ornithine and carbamoyl phosphate: step 3/3. This is Argininosuccinate lyase from Dechloromonas aromatica (strain RCB).